We begin with the raw amino-acid sequence, 323 residues long: tRNA U34 carboxymethyltransferase (323 aa).

Residues lysine 91, tryptophan 105, lysine 110, glycine 130, 152–154 (DPT), 181–182 (IE), methionine 196, tyrosine 200, and arginine 315 contribute to the carboxy-S-adenosyl-L-methionine site.

Belongs to the class I-like SAM-binding methyltransferase superfamily. CmoB family. In terms of assembly, homotetramer.

It catalyses the reaction carboxy-S-adenosyl-L-methionine + 5-hydroxyuridine(34) in tRNA = 5-carboxymethoxyuridine(34) in tRNA + S-adenosyl-L-homocysteine + H(+). Functionally, catalyzes carboxymethyl transfer from carboxy-S-adenosyl-L-methionine (Cx-SAM) to 5-hydroxyuridine (ho5U) to form 5-carboxymethoxyuridine (cmo5U) at position 34 in tRNAs. This is tRNA U34 carboxymethyltransferase from Shigella boydii serotype 18 (strain CDC 3083-94 / BS512).